Reading from the N-terminus, the 466-residue chain is GTPase Der (466 aa).

EngA-type G domains are found at residues 30 to 193 and 203 to 376; these read PVVA…PEVS and RRVA…ASWD. GTP is bound by residues 36-43, 83-87, 145-148, 209-216, 256-260, and 321-324; these read GRPNVGKS, DTGGW, NKVD, GKPNVGKS, DTAGL, and NKWD. The KH-like domain maps to 377–459; that stretch reads TRIATGPLNS…PIRINVRVRE (83 aa).

Belongs to the TRAFAC class TrmE-Era-EngA-EngB-Septin-like GTPase superfamily. EngA (Der) GTPase family. In terms of assembly, associates with the 50S ribosomal subunit.

In terms of biological role, GTPase that plays an essential role in the late steps of ribosome biogenesis. The polypeptide is GTPase Der (Mycolicibacterium paratuberculosis (strain ATCC BAA-968 / K-10) (Mycobacterium paratuberculosis)).